We begin with the raw amino-acid sequence, 349 residues long: Phosphoribosylformylglycinamidine cyclo-ligase (349 aa).

The protein belongs to the AIR synthase family.

It localises to the cytoplasm. It catalyses the reaction 2-formamido-N(1)-(5-O-phospho-beta-D-ribosyl)acetamidine + ATP = 5-amino-1-(5-phospho-beta-D-ribosyl)imidazole + ADP + phosphate + H(+). Its pathway is purine metabolism; IMP biosynthesis via de novo pathway; 5-amino-1-(5-phospho-D-ribosyl)imidazole from N(2)-formyl-N(1)-(5-phospho-D-ribosyl)glycinamide: step 2/2. The polypeptide is Phosphoribosylformylglycinamidine cyclo-ligase (Lactobacillus delbrueckii subsp. bulgaricus (strain ATCC BAA-365 / Lb-18)).